The sequence spans 89 residues: Cell division topological specificity factor (89 aa).

The protein belongs to the MinE family.

Its function is as follows. Prevents the cell division inhibition by proteins MinC and MinD at internal division sites while permitting inhibition at polar sites. This ensures cell division at the proper site by restricting the formation of a division septum at the midpoint of the long axis of the cell. The protein is Cell division topological specificity factor of Heliobacterium modesticaldum (strain ATCC 51547 / Ice1).